The primary structure comprises 121 residues: Large ribosomal subunit protein bL19 (121 aa).

It belongs to the bacterial ribosomal protein bL19 family.

Its function is as follows. This protein is located at the 30S-50S ribosomal subunit interface and may play a role in the structure and function of the aminoacyl-tRNA binding site. The protein is Large ribosomal subunit protein bL19 (rplS) of Chlamydia pneumoniae (Chlamydophila pneumoniae).